The primary structure comprises 274 residues: Beta-lysine N(6)-acetyltransferase (274 aa).

The region spanning F123–E274 is the N-acetyltransferase domain.

This sequence belongs to the acetyltransferase family.

The enzyme catalyses (3S)-3,6-diaminohexanoate + acetyl-CoA = (3S)-6-acetamido-3-aminohexanoate + CoA + H(+). Its function is as follows. Catalyzes the acetylation of beta-lysine to N6-acetyl-beta-lysine, a compatible solute produced by methanogenic archaea that helps cells to cope with salt stress. The chain is Beta-lysine N(6)-acetyltransferase from Methanococcus maripaludis (strain DSM 14266 / JCM 13030 / NBRC 101832 / S2 / LL).